The chain runs to 61 residues: Large ribosomal subunit protein eL37 (61 aa).

Zn(2+) contacts are provided by cysteine 19, cysteine 22, cysteine 34, and cysteine 37. A C4-type zinc finger spans residues 19–37; it reads CRRCGRNAYNVSKHYCAAC.

It belongs to the eukaryotic ribosomal protein eL37 family. Requires Zn(2+) as cofactor.

In terms of biological role, binds to the 23S rRNA. This Saccharolobus islandicus (strain Y.N.15.51 / Yellowstone #2) (Sulfolobus islandicus) protein is Large ribosomal subunit protein eL37.